A 150-amino-acid chain; its full sequence is Ribonuclease pancreatic delta-type (150 aa).

A signal peptide spans 1 to 25; that stretch reads MGLEKSFILFSLLVLVLGWVQPSLG. Arg-35 contacts substrate. His-37 serves as the catalytic Proton acceptor. 4 disulfide bridges follow: Cys-51–Cys-110, Cys-65–Cys-121, Cys-83–Cys-136, and Cys-90–Cys-98. Substrate is bound by residues 66-70 and Lys-91; that span reads KPVNT. The active-site Proton donor is His-145.

It belongs to the pancreatic ribonuclease family. As to quaternary structure, monomer.

Its subcellular location is the secreted. The enzyme catalyses an [RNA] containing cytidine + H2O = an [RNA]-3'-cytidine-3'-phosphate + a 5'-hydroxy-ribonucleotide-3'-[RNA].. It catalyses the reaction an [RNA] containing uridine + H2O = an [RNA]-3'-uridine-3'-phosphate + a 5'-hydroxy-ribonucleotide-3'-[RNA].. Endonuclease that catalyzes the cleavage of RNA on the 3' side of pyrimidine nucleotides. Acts on single-stranded and double-stranded RNA. The protein is Ribonuclease pancreatic delta-type of Rattus tiomanicus (Malayan field rat).